The sequence spans 1246 residues: DNA-directed RNA polymerase subunit beta (1246 aa).

The disordered stretch occupies residues 1171-1246 (IDDDAGEMSL…EFDGYNDFKA (76 aa)). Acidic residues-rich tracts occupy residues 1202–1223 (DEEE…EDFE) and 1230–1240 (EYAEDDDEFDG).

The protein belongs to the RNA polymerase beta chain family. In terms of assembly, the RNAP catalytic core consists of 2 alpha, 1 beta, 1 beta' and 1 omega subunit. When a sigma factor is associated with the core the holoenzyme is formed, which can initiate transcription.

The enzyme catalyses RNA(n) + a ribonucleoside 5'-triphosphate = RNA(n+1) + diphosphate. Its function is as follows. DNA-dependent RNA polymerase catalyzes the transcription of DNA into RNA using the four ribonucleoside triphosphates as substrates. The protein is DNA-directed RNA polymerase subunit beta of Alkaliphilus metalliredigens (strain QYMF).